Consider the following 346-residue polypeptide: MSLLKDSTVAVITGTSSNLGFNIAVRLLEGLPDNKEITLVVTSRTLPKVKEVISDIKKYIVAKIPTKVNKVEFDYLLVDFTDMVSILSAYYELNKRYKHIDYLFINAAQGVYGGIDWTGAVLEVLQSPIEAVTNPTYKLQKVGVESGDKLGLVFQANVFGPYYFIHRIKHLLENGGKIVWVSSLMSSPKYLSFNDLQLLRSPASYEGSKRLVDLMHFGTYNKLEREHGIKQYLVHPGIFTSFSFFQYLNVFTYYGMLFLFYLARFLGSPYHNISGYIAANAPVAAALGQTKQNCKTASACTRSGKEYLLEEEIDSTGSDDVVSYLDTLTKEWDEKLKDQIVNTRQP.

3 residues coordinate NADP(+): Leu-19, Thr-42, and Lys-48. Residues Ser-182 and Tyr-205 each act as proton donor in the active site. NADP(+)-binding residues include Tyr-205, Lys-209, and Ser-241. The active-site Lowers pKa of active site Tyr is Lys-209. The chain crosses the membrane as a helical span at residues Phe-242 to Leu-262. Asn-272 is a glycosylation site (N-linked (GlcNAc...) asparagine).

This sequence belongs to the short-chain dehydrogenases/reductases (SDR) family. ERG27 subfamily. As to quaternary structure, heterotetramer of ERG25, ERG26, ERG27 and ERG28. ERG28 acts as a scaffold to tether ERG27 and other 4,4-demethylation-related enzymes, forming a demethylation enzyme complex, in the endoplasmic reticulum. Interacts with ERG25 and ERG28. Also interacts with ERG7, but only in lipid particles.

The protein localises to the endoplasmic reticulum membrane. The protein resides in the lipid droplet. The enzyme catalyses 3-dehydro-4alpha-methylzymosterol + NADPH + H(+) = 4alpha-methylzymosterol + NADP(+). It participates in steroid biosynthesis; zymosterol biosynthesis; zymosterol from lanosterol: step 5/6. 3-keto-steroid reductase; part of the third module of ergosterol biosynthesis pathway that includes the late steps of the pathway. ERG27 is a catalytic component of the C-4 demethylation complex that catalyzes the reduction of the keto group on the C-3. The third module or late pathway involves the ergosterol synthesis itself through consecutive reactions that mainly occur in the endoplasmic reticulum (ER) membrane. Firstly, the squalene synthase ERG9 catalyzes the condensation of 2 farnesyl pyrophosphate moieties to form squalene, which is the precursor of all steroids. Squalene synthase is crucial for balancing the incorporation of farnesyl diphosphate (FPP) into sterol and nonsterol isoprene synthesis. Secondly, the squalene epoxidase ERG1 catalyzes the stereospecific oxidation of squalene to (S)-2,3-epoxysqualene, which is considered to be a rate-limiting enzyme in steroid biosynthesis. Then, the lanosterol synthase ERG7 catalyzes the cyclization of (S)-2,3 oxidosqualene to lanosterol, a reaction that forms the sterol core. In the next steps, lanosterol is transformed to zymosterol through a complex process involving various demethylation, reduction and desaturation reactions. The lanosterol 14-alpha-demethylase ERG11 (also known as CYP51) catalyzes C14-demethylation of lanosterol to produce 4,4'-dimethyl cholesta-8,14,24-triene-3-beta-ol, which is critical for ergosterol biosynthesis. The C-14 reductase ERG24 reduces the C14=C15 double bond of 4,4-dimethyl-cholesta-8,14,24-trienol to produce 4,4-dimethyl-cholesta-8,24-dienol. 4,4-dimethyl-cholesta-8,24-dienol is substrate of the C-4 demethylation complex ERG25-ERG26-ERG27 in which ERG25 catalyzes the three-step monooxygenation required for the demethylation of 4,4-dimethyl and 4alpha-methylsterols, ERG26 catalyzes the oxidative decarboxylation that results in a reduction of the 3-beta-hydroxy group at the C-3 carbon to an oxo group, and ERG27 is responsible for the reduction of the keto group on the C-3. ERG28 has a role as a scaffold to help anchor ERG25, ERG26 and ERG27 to the endoplasmic reticulum and ERG29 regulates the activity of the iron-containing C4-methylsterol oxidase ERG25. Then, the sterol 24-C-methyltransferase ERG6 catalyzes the methyl transfer from S-adenosyl-methionine to the C-24 of zymosterol to form fecosterol. The C-8 sterol isomerase ERG2 catalyzes the reaction which results in unsaturation at C-7 in the B ring of sterols and thus converts fecosterol to episterol. The sterol-C5-desaturase ERG3 then catalyzes the introduction of a C-5 double bond in the B ring to produce 5-dehydroepisterol. The C-22 sterol desaturase ERG5 further converts 5-dehydroepisterol into ergosta-5,7,22,24(28)-tetraen-3beta-ol by forming the C-22(23) double bond in the sterol side chain. Finally, ergosta-5,7,22,24(28)-tetraen-3beta-ol is substrate of the C-24(28) sterol reductase ERG4 to produce ergosterol. Functionally, facilitates the association of ERG7 with lipid particles preventing its digestion in the endoplasmic reticulum and the lipid particles. The chain is 3-keto-steroid reductase ERG27 from Candida albicans (strain SC5314 / ATCC MYA-2876) (Yeast).